The chain runs to 552 residues: CTP synthase (552 aa).

Residues 1-265 (MTKYIFITGG…DEIVVRKLRL (265 aa)) are amidoligase domain. A CTP-binding site is contributed by Ser13. Residue Ser13 coordinates UTP. ATP-binding positions include 14-19 (SLGKGI) and Asp71. Mg(2+) contacts are provided by Asp71 and Glu139. CTP contacts are provided by residues 146 to 148 (DIE), 186 to 191 (KTKPTQ), and Lys222. UTP is bound by residues 186-191 (KTKPTQ) and Lys222. A Glutamine amidotransferase type-1 domain is found at 290-541 (TVAMVGKYVN…VRAARARSEG (252 aa)). Residue Gly351 coordinates L-glutamine. The active-site Nucleophile; for glutamine hydrolysis is Cys378. L-glutamine is bound by residues 379-382 (LGMQ), Glu402, and Arg469. Active-site residues include His514 and Glu516.

Belongs to the CTP synthase family. Homotetramer.

The catalysed reaction is UTP + L-glutamine + ATP + H2O = CTP + L-glutamate + ADP + phosphate + 2 H(+). It carries out the reaction L-glutamine + H2O = L-glutamate + NH4(+). The enzyme catalyses UTP + NH4(+) + ATP = CTP + ADP + phosphate + 2 H(+). It functions in the pathway pyrimidine metabolism; CTP biosynthesis via de novo pathway; CTP from UDP: step 2/2. With respect to regulation, allosterically activated by GTP, when glutamine is the substrate; GTP has no effect on the reaction when ammonia is the substrate. The allosteric effector GTP functions by stabilizing the protein conformation that binds the tetrahedral intermediate(s) formed during glutamine hydrolysis. Inhibited by the product CTP, via allosteric rather than competitive inhibition. Functionally, catalyzes the ATP-dependent amination of UTP to CTP with either L-glutamine or ammonia as the source of nitrogen. Regulates intracellular CTP levels through interactions with the four ribonucleotide triphosphates. This is CTP synthase from Methylococcus capsulatus (strain ATCC 33009 / NCIMB 11132 / Bath).